A 125-amino-acid polypeptide reads, in one-letter code: Histone H1-like protein HC1 (125 aa).

It belongs to the histone H1/H5 family. HCT subfamily.

Functionally, might have a role analogous to that of eukaryotic histone proteins. This chain is Histone H1-like protein HC1 (hctA), found in Chlamydia muridarum (strain MoPn / Nigg).